Consider the following 155-residue polypeptide: Histone H3-like centromeric protein hH3v (155 aa).

A compositionally biased stretch (low complexity) spans 1 to 24 (MPPKKGGVTKSKAVSKKAAAVPTP). Positions 1-56 (MPPKKGGVTKSKAVSKKAAAVPTPKATPPGRRKSRASSVQPGDPVPQGKKRRYRPG) are disordered. The interval 45 to 148 (VPQGKKRRYR…IQLARRIRGV (104 aa)) is H3-like.

This sequence belongs to the histone H3 family. As to quaternary structure, component of centromeric nucleosomes, where DNA is wrapped around a histone octamer core. The octamer contains two molecules each of H2A, H2B, hH3v/CENPA and H4 assembled in one hH3v-H4 heterotetramer and two H2A-H2B heterodimers. Interacts with the inner kinetochore. In terms of processing, ubiquitinated. Is degraded through ubiquitin-mediated proteolysis when not protected by its association to the kinetochore.

Its subcellular location is the nucleus. The protein localises to the chromosome. The protein resides in the centromere. Histone H3-like nucleosomal protein that is specifically found in centromeric nucleosomes. Replaces conventional H3 in the nucleosome core of centromeric chromatin that serves as an assembly site for the inner kinetochore. Required for recruitment and assembly of kinetochore proteins, mitotic progression and chromosome segregation. May serve as an epigenetic mark that propagates centromere identity through replication and cell division. This Neurospora crassa (strain ATCC 24698 / 74-OR23-1A / CBS 708.71 / DSM 1257 / FGSC 987) protein is Histone H3-like centromeric protein hH3v (hH3v).